The sequence spans 306 residues: Glutathione transport system permease protein GsiC (306 aa).

At 1 to 8 (MLNYVIKR) the chain is on the cytoplasmic side. A helical transmembrane segment spans residues 9-29 (LLGLIPTLFIVSVLVFLFVHM). The Periplasmic portion of the chain corresponds to 30–102 (LPGDPARLIA…SRFMPTLWLT (73 aa)). Residues 95–292 (FMPTLWLTIT…LEFILINLVV (198 aa)) form the ABC transmembrane type-1 domain. The chain crosses the membrane as a helical span at residues 103 to 123 (ITSMVWAVIFGMAAGIIAAVW). At 124-134 (RNRWPDRLSMT) the chain is on the cytoplasmic side. Residues 135–155 (IAVSGISFPAFALGMFLIQVF) traverse the membrane as a helical segment. Topologically, residues 156–168 (SVELGWLPTVGAD) are periplasmic. A helical membrane pass occupies residues 169-189 (SWQHYILPSLTLGAAVAAVMA). The Cytoplasmic segment spans residues 190–228 (RFTRASFVDVLSEDYMRTARAKGVSETWVVLKHGLRNAM). The chain crosses the membrane as a helical span at residues 229-249 (IPVVTMMGLQFGFLLGGSIVV). Residues 250 to 277 (EKVFNWPGLGRLLVDSVEMRDYPVIQAE) lie on the Periplasmic side of the membrane. A helical transmembrane segment spans residues 278–298 (ILLFSLEFILINLVVDVLYAA). Residues 299–306 (INPAIRYK) lie on the Cytoplasmic side of the membrane.

This sequence belongs to the binding-protein-dependent transport system permease family. In terms of assembly, the complex is composed of two ATP-binding proteins (GsiA), two transmembrane proteins (GsiC and GsiD) and a solute-binding protein (GsiB).

It localises to the cell inner membrane. Functionally, part of the ABC transporter complex GsiABCD involved in glutathione import. Probably responsible for the translocation of the substrate across the membrane. The sequence is that of Glutathione transport system permease protein GsiC from Shigella flexneri serotype 5b (strain 8401).